Reading from the N-terminus, the 407-residue chain is Cation efflux system protein CusB (407 aa).

An N-terminal signal peptide occupies residues 1-28 (MKKIALIIGSMIAGGIISAAGFTWVAKA).

This sequence belongs to the membrane fusion protein (MFP) (TC 8.A.1) family. The cus efflux system is composed of CusA, CusB, CusC and CusF.

Its function is as follows. Part of a cation efflux system that mediates resistance to copper and silver. This chain is Cation efflux system protein CusB (cusB), found in Escherichia coli (strain K12).